We begin with the raw amino-acid sequence, 547 residues long: Glucose-6-phosphate isomerase (547 aa).

Glutamate 351 functions as the Proton donor in the catalytic mechanism. Residues histidine 382 and lysine 510 contribute to the active site.

It belongs to the GPI family.

It localises to the cytoplasm. The enzyme catalyses alpha-D-glucose 6-phosphate = beta-D-fructose 6-phosphate. It participates in carbohydrate biosynthesis; gluconeogenesis. The protein operates within carbohydrate degradation; glycolysis; D-glyceraldehyde 3-phosphate and glycerone phosphate from D-glucose: step 2/4. Its function is as follows. Catalyzes the reversible isomerization of glucose-6-phosphate to fructose-6-phosphate. This Beijerinckia indica subsp. indica (strain ATCC 9039 / DSM 1715 / NCIMB 8712) protein is Glucose-6-phosphate isomerase.